A 598-amino-acid polypeptide reads, in one-letter code: (-)-endo-fenchol synthase, chloroplastic (598 aa).

A chloroplast-targeting transit peptide spans 1 to 34 (MWSTISISMNVAILKKPLNFLHNSNNKASNPRCV). Mg(2+) contacts are provided by Asp-351, Asp-355, Asp-495, Thr-499, and Glu-503. Residues 351-355 (DDVYD) carry the DDXXD motif motif.

It belongs to the terpene synthase family. The cofactor is Mg(2+). Mn(2+) serves as cofactor.

Its subcellular location is the plastid. It localises to the chloroplast. It catalyses the reaction (2E)-geranyl diphosphate + H2O = (1S,2S,4R)-endo-fenchol + diphosphate. The protein operates within secondary metabolite biosynthesis; terpenoid biosynthesis. Functionally, monoterpene synthase that catalyzes the formation of fenchol from geranyl diphosphate. The sequence is that of (-)-endo-fenchol synthase, chloroplastic (FES) from Ocimum basilicum (Sweet basil).